Consider the following 416-residue polypeptide: Probable histone-binding protein lin-53 (416 aa).

WD repeat units follow at residues 118–158 (NHEG…SVPK), 170–210 (GHTK…GANG), 220–260 (GHES…PGHA), 263–303 (AHSA…LKLH), 307–347 (SHRD…EDQT), and 364–404 (GHTA…YNDV).

It belongs to the WD repeat RBAP46/RBAP48/MSI1 family. In terms of assembly, binds directly to helix 1 of the histone fold of histone H4, a region that is not accessible when H4 is in chromatin. Probable component of a NuRD-like complex, composed of at least lin-53 and hda-1. Interacts with lin-35. Interacts with hda-1; the interaction is direct. Component of the DRM complex, at least composed of lin-9, lin-35, lin-37, lin-52, lin-53, lin-54- dpl-1 and efl-1. Interacts with hcp-3.

The protein localises to the nucleus. The protein resides in the chromosome. It localises to the centromere. In terms of biological role, core histone-binding subunit that may target chromatin assembly factors, chromatin remodeling factors and histone deacetylases to their histone substrates in a manner that is regulated by nucleosomal DNA. Required for hcp-3 and his-1 stabilization, localization of hcp-3 to centromeres and for proper chromosome segregation. Synthetic multivulva class B (synMuvB) protein. SynMuvB proteins are required to repress the induction of vulval development by Ras signaling and probably act by forming the multiprotein DRM complex that represses transcription. This Caenorhabditis briggsae protein is Probable histone-binding protein lin-53.